The following is a 380-amino-acid chain: Cytochrome b (380 aa).

The next 4 membrane-spanning stretches (helical) occupy residues 34–54, 78–99, 114–134, and 179–199; these read FGSL…FLAM, WLLR…YFHI, WNIG…GYVL, and FFTF…IHLL. 2 residues coordinate heme b: H84 and H98. Residues H183 and H197 each contribute to the heme b site. H202 is an a ubiquinone binding site. 4 consecutive transmembrane segments (helical) span residues 227–247, 289–309, 321–341, and 348–368; these read YKDL…STFA, LGGV…PIIH, IAKT…WIGG, and FITI…LLIP.

Belongs to the cytochrome b family. As to quaternary structure, the cytochrome bc1 complex contains 3 respiratory subunits (MT-CYB, CYC1 and UQCRFS1), 2 core proteins (UQCRC1 and UQCRC2) and probably 6 low-molecular weight proteins. Heme b serves as cofactor.

The protein localises to the mitochondrion inner membrane. Component of the ubiquinol-cytochrome c reductase complex (complex III or cytochrome b-c1 complex) that is part of the mitochondrial respiratory chain. The b-c1 complex mediates electron transfer from ubiquinol to cytochrome c. Contributes to the generation of a proton gradient across the mitochondrial membrane that is then used for ATP synthesis. This is Cytochrome b (mt-cyb) from Rana amurensis (Siberian wood frog).